The chain runs to 417 residues: Serine hydroxymethyltransferase (417 aa).

(6S)-5,6,7,8-tetrahydrofolate-binding positions include Leu-121 and 125 to 127; that span reads GHL. At Lys-229 the chain carries N6-(pyridoxal phosphate)lysine. (6S)-5,6,7,8-tetrahydrofolate is bound at residue 354–356; that stretch reads SPF.

The protein belongs to the SHMT family. Homodimer. Pyridoxal 5'-phosphate serves as cofactor.

Its subcellular location is the cytoplasm. It carries out the reaction (6R)-5,10-methylene-5,6,7,8-tetrahydrofolate + glycine + H2O = (6S)-5,6,7,8-tetrahydrofolate + L-serine. It functions in the pathway one-carbon metabolism; tetrahydrofolate interconversion. It participates in amino-acid biosynthesis; glycine biosynthesis; glycine from L-serine: step 1/1. Functionally, catalyzes the reversible interconversion of serine and glycine with tetrahydrofolate (THF) serving as the one-carbon carrier. This reaction serves as the major source of one-carbon groups required for the biosynthesis of purines, thymidylate, methionine, and other important biomolecules. Also exhibits THF-independent aldolase activity toward beta-hydroxyamino acids, producing glycine and aldehydes, via a retro-aldol mechanism. The sequence is that of Serine hydroxymethyltransferase from Stutzerimonas stutzeri (strain A1501) (Pseudomonas stutzeri).